A 509-amino-acid polypeptide reads, in one-letter code: ATP synthase subunit alpha (509 aa).

ATP is bound at residue 169-176 (GDRKTGKT).

Belongs to the ATPase alpha/beta chains family. As to quaternary structure, F-type ATPases have 2 components, CF(1) - the catalytic core - and CF(0) - the membrane proton channel. CF(1) has five subunits: alpha(3), beta(3), gamma(1), delta(1), epsilon(1). CF(0) has three main subunits: a(1), b(2) and c(9-12). The alpha and beta chains form an alternating ring which encloses part of the gamma chain. CF(1) is attached to CF(0) by a central stalk formed by the gamma and epsilon chains, while a peripheral stalk is formed by the delta and b chains.

The protein resides in the cell membrane. It catalyses the reaction ATP + H2O + 4 H(+)(in) = ADP + phosphate + 5 H(+)(out). Produces ATP from ADP in the presence of a proton gradient across the membrane. The alpha chain is a regulatory subunit. In Limosilactobacillus reuteri (strain DSM 20016) (Lactobacillus reuteri), this protein is ATP synthase subunit alpha.